We begin with the raw amino-acid sequence, 246 residues long: MADS-box transcription factor 14 (246 aa).

Residues 1–61 (MGRGKVQLKR…GKLYEYATDS (61 aa)) enclose the MADS-box domain. Positions 88 to 178 (QGNWCHEYRK…QKELVEKQKV (91 aa)) constitute a K-box domain. The disordered stretch occupies residues 180–199 (KQQVQWDQTQPQTSSSSSSF).

As to quaternary structure, may interact with the K-box of MADS1 and MADS6. Highly expressed in sterile lemmas, at intermediate levels in stamens, and weakly in lemmas, paleas and carpels.

It localises to the nucleus. In terms of biological role, probable transcription factor. May be involved in the control of flowering time. The protein is MADS-box transcription factor 14 (MADS14) of Oryza sativa subsp. japonica (Rice).